The primary structure comprises 175 residues: Adenylate kinase isoenzyme 6 homolog (175 aa).

Gly18, Gly20, Lys21, Thr22, and Thr23 together coordinate ATP. Residues 38–61 form an NMPbind region; the sequence is CIGDVVKENHLHFGFDEKWKTYDV. Residues 113–123 are LID; sequence SRGYSLEKIQE. Arg114 is a binding site for ATP.

This sequence belongs to the adenylate kinase family. AK6 subfamily. In terms of assembly, interacts with small ribosomal subunit protein uS11. Not a structural component of 43S pre-ribosomes, but transiently interacts with them by binding to uS11.

It is found in the cytoplasm. Its subcellular location is the nucleus. It carries out the reaction AMP + ATP = 2 ADP. The enzyme catalyses ATP + H2O = ADP + phosphate + H(+). In terms of biological role, broad-specificity nucleoside monophosphate (NMP) kinase that catalyzes the reversible transfer of the terminal phosphate group between nucleoside triphosphates and monophosphates. Also has ATPase activity. Involved in the late cytoplasmic maturation steps of the 40S ribosomal particles, specifically 18S rRNA maturation. While NMP activity is not required for ribosome maturation, ATPase activity is. Associates transiently with small ribosomal subunit protein uS11. ATP hydrolysis breaks the interaction with uS11. May temporarily remove uS11 from the ribosome to enable a conformational change of the ribosomal RNA that is needed for the final maturation step of the small ribosomal subunit. Its NMP activity may have a role in nuclear energy homeostasis. The chain is Adenylate kinase isoenzyme 6 homolog (fap7) from Schizosaccharomyces pombe (strain 972 / ATCC 24843) (Fission yeast).